The sequence spans 170 residues: Adenine phosphoribosyltransferase (170 aa).

This sequence belongs to the purine/pyrimidine phosphoribosyltransferase family. Homodimer.

Its subcellular location is the cytoplasm. It catalyses the reaction AMP + diphosphate = 5-phospho-alpha-D-ribose 1-diphosphate + adenine. The protein operates within purine metabolism; AMP biosynthesis via salvage pathway; AMP from adenine: step 1/1. Functionally, catalyzes a salvage reaction resulting in the formation of AMP, that is energically less costly than de novo synthesis. This chain is Adenine phosphoribosyltransferase, found in Fervidobacterium nodosum (strain ATCC 35602 / DSM 5306 / Rt17-B1).